The following is a 259-amino-acid chain: Taurine import ATP-binding protein TauB (259 aa).

In terms of domain architecture, ABC transporter spans 4-233 (LELERISAQY…RYAAGESARA (230 aa)). 38–45 (GPSGSGKT) serves as a coordination point for ATP.

The protein belongs to the ABC transporter superfamily. Taurine importer (TC 3.A.1.17.1) family. In terms of assembly, the complex is composed of two ATP-binding proteins (TauB), two transmembrane proteins (TauC) and a solute-binding protein (TauA).

Its subcellular location is the cell inner membrane. The enzyme catalyses taurine(out) + ATP + H2O = taurine(in) + ADP + phosphate + H(+). Its function is as follows. Part of the ABC transporter complex TauABC involved in taurine import. Responsible for energy coupling to the transport system. The sequence is that of Taurine import ATP-binding protein TauB from Pseudomonas entomophila (strain L48).